The sequence spans 380 residues: Asporin (380 aa).

Residues 1–14 form the signal peptide; sequence MKEYVLLLFLALCS. The propeptide occupies 15–32; sequence AKPFFSPSHIALKNMMLK. The span at 35–54 shows a compositional bias: acidic residues; the sequence is EDTDDDDDDDDDDDDDDEDN. The interval 35–59 is disordered; sequence EDTDDDDDDDDDDDDDDEDNSLFPT. O-linked (GalNAc...) serine glycosylation is present at Ser-55. The LRRNT domain occupies 66 to 102; that stretch reads FFPFDLFPMCPFGCQCYSRVVHCSDLGLTSVPTNIPF. Intrachain disulfides connect Cys-75-Cys-81 and Cys-79-Cys-88. LRR repeat units follow at residues 103–124, 127–148, 151–173, 174–193, 196–219, 242–263, 266–287, 290–312, 313–334, 335–357, and 358–380; these read DTRM…DFKG, SLYG…AFLT, KLRR…PKSL, AELR…TFKG, ALHV…AFEG, TLLE…DFKR, ELQR…SLAN, RVRE…PELK, YLQI…DFCP, TVPK…VKYW, and EMQP…NFGM. Residues 166–212 form an interaction with TGFB1 region; that stretch reads PLNLPKSLAELRIHENKVKKIQKDTFKGMNALHVLEMSANPLDNNGI. Residue Asn-282 is glycosylated (N-linked (GlcNAc...) asparagine). A disulfide bridge links Cys-333 with Cys-366.

Belongs to the small leucine-rich proteoglycan (SLRP) family. SLRP class I subfamily. In terms of assembly, interacts with TGFB1, TGFB2 and TGFB3. DCN, BGN, and FMOD inhibit binding to TGFB1. Interacts with BMP2. Interacts in vitro with type II collagen. Interacts with type I collagen. DCN can inhibit collagen binding. There is no serine/glycine dipeptide sequence expected for the attachment of O-linked glycosaminoglycans and this is probably not a proteoglycan. The O-linked polysaccharide on 54-Ser is probably the mucin type linked to GalNAc. Post-translationally, the N-linked glycan at Asn-282 is composed of variable structures of GlcNAc, mannose, fucose, HexNAc and hexose. Higher levels in osteoarthritic articular cartilage, aorta, uterus. Moderate expression in small intestine, heart, liver, bladder, ovary, stomach, and in the adrenal, thyroid, and mammary glands. Low expression in trachea, bone marrow, and lung. Colocalizes with TGFB1 in chondrocytes within osteoarthritic (OA) lesions of articular cartilage.

The protein resides in the secreted. Its subcellular location is the extracellular space. It is found in the extracellular matrix. In terms of biological role, negatively regulates periodontal ligament (PDL) differentiation and mineralization to ensure that the PDL is not ossified and to maintain homeostasis of the tooth-supporting system. Inhibits BMP2-induced cytodifferentiation of PDL cells by preventing its binding to BMPR1B/BMP type-1B receptor, resulting in inhibition of BMP-dependent activation of SMAD proteins. Critical regulator of TGF-beta in articular cartilage and plays an essential role in cartilage homeostasis and osteoarthritis (OA) pathogenesis. Negatively regulates chondrogenesis in the articular cartilage by blocking the TGF-beta/receptor interaction on the cell surface and inhibiting the canonical TGF-beta/Smad signal. Binds calcium and plays a role in osteoblast-driven collagen biomineralization activity. The chain is Asporin (ASPN) from Homo sapiens (Human).